The following is a 115-amino-acid chain: Large ribosomal subunit protein bL19 (115 aa).

It belongs to the bacterial ribosomal protein bL19 family.

This protein is located at the 30S-50S ribosomal subunit interface and may play a role in the structure and function of the aminoacyl-tRNA binding site. In Escherichia coli O139:H28 (strain E24377A / ETEC), this protein is Large ribosomal subunit protein bL19.